We begin with the raw amino-acid sequence, 432 residues long: Putative transposase A625R (432 aa).

Zn(2+) contacts are provided by cysteine 375, cysteine 378, cysteine 393, and cysteine 395.

The protein in the N-terminal section; belongs to the transposase 2 family. In the C-terminal section; belongs to the transposase 35 family.

The chain is Putative transposase A625R from Chlorella (PBCV-1).